Reading from the N-terminus, the 423-residue chain is UBX domain-containing protein 1 (423 aa).

A disordered region spans residues 44 to 167 (QTDDQKDRRE…EVTDPSDPNS (124 aa)). The segment covering 46–66 (DDQKDRREEAHWNRQQEKALK) has biased composition (basic and acidic residues). Residues 69–79 (AFSTNSSNKAI) are compositionally biased toward polar residues. Positions 115–130 (SSRSGSGNNSRFMSFS) are enriched in low complexity. Residues S128, S210, and S224 each carry the phosphoserine modification. Positions 232–297 (KVTREITFWK…VYKKLDESYK (66 aa)) constitute an SEP domain. K241 participates in a covalent cross-link: Glycyl lysine isopeptide (Lys-Gly) (interchain with G-Cter in ubiquitin). The segment at 299–348 (PTRKLGGFSGQGQRLGSPIPGESSPAEVPKNETPAAQEQPMPDNEPKQGD) is disordered. Phosphoserine is present on residues S315, S321, and S322. T331 bears the Phosphothreonine mark. The region spanning 344-421 (PKQGDTSIQI…DLLNSVVVQR (78 aa)) is the UBX domain.

Forms a complex composed of CDC48, NPL4, UFD1, DOA1, SHP1 and deubiquitinase OTU1. Interacts with CDC48.

It localises to the nucleus. Its subcellular location is the cytoplasm. Functionally, involved in CDC48-dependent protein degradation through the ubiquitin/proteasome pathway. Direct or indirect positive regulator of GLC7 activity. This Saccharomyces cerevisiae (strain ATCC 204508 / S288c) (Baker's yeast) protein is UBX domain-containing protein 1 (SHP1).